A 500-amino-acid chain; its full sequence is MGLLTGDALFSVAVAVAIFLLLVDLMHRRQRWAARYPPGPVPVPGLGNLLQVDFENMAYSCDKLRHQFGDVFSLQFVWTPVVVVNGLLAVREALVNNSTDTSDRPTLPTNALLGFGPKAQGVIGAYYGPAWREQRRFSVSSLRNFGLGKKSLEQWVTEEAACLCAAFTNHAGQPFCPKALLNKAVCNVISSLIYARRFDYDDPMVLRLLEFLEETLRENSSLKIQVLNSIPLLLRIPCVAAKVLSAQRSFIALNDKLLAEHNTGWAPDQPPRDLTDAFLTEMHKAQGNSESSFNDENLRLLVSDLFGAGMVTTSVTLSWALLLMILHPDVQRHVQEEIDEVIGQVRCPEMADQAHMPFTNAVIHEVQRFADIVPMGVPHMTSRDTEVQGFLIPKGTMLFTNLSSVLKDETVWEKPLHFHPGHFLDAEGRFVKREAFMPFSAGPRICLGEPLARMELFLFFTSLLQRFSFSVPEGQPRPSDRGAPYLVVLPSPYQLCAVLR.

Ser249 is modified (phosphoserine). Cys446 contributes to the heme binding site.

Belongs to the cytochrome P450 family. Heme serves as cofactor. In terms of tissue distribution, expressed at high levels in the inner zone of the adrenal cortex.

The protein resides in the endoplasmic reticulum membrane. It is found in the microsome membrane. The enzyme catalyses an organic molecule + reduced [NADPH--hemoprotein reductase] + O2 = an alcohol + oxidized [NADPH--hemoprotein reductase] + H2O + H(+). Cytochromes P450 are a group of heme-thiolate monooxygenases. In liver microsomes, this enzyme is involved in an NADPH-dependent electron transport pathway. It oxidizes a variety of structurally unrelated compounds, including steroids, fatty acids, and xenobiotics. The polypeptide is Cytochrome P450 2D16 (CYP2D16) (Cavia porcellus (Guinea pig)).